Consider the following 210-residue polypeptide: Glycerol-3-phosphate acyltransferase 2 (210 aa).

6 consecutive transmembrane segments (helical) span residues 4–24, 54–74, 82–102, 114–134, 141–161, and 163–183; these read LIMVIIALIAAYFIGSTPAPY, FWPGILVLAVDIGKGALAMAV, LGIQMLCALMAIAGHNYPVWL, IGILAYLMPEGIPIYIACFLV, FPTLSYGISFLSFILVAWLGQ, and DLGKVLFSLLVVMIPIIMYIP.

The protein belongs to the PlsY family. Probably interacts with PlsX.

The protein resides in the cell membrane. It catalyses the reaction an acyl phosphate + sn-glycerol 3-phosphate = a 1-acyl-sn-glycero-3-phosphate + phosphate. Its pathway is lipid metabolism; phospholipid metabolism. Functionally, catalyzes the transfer of an acyl group from acyl-phosphate (acyl-PO(4)) to glycerol-3-phosphate (G3P) to form lysophosphatidic acid (LPA). This enzyme utilizes acyl-phosphate as fatty acyl donor, but not acyl-CoA or acyl-ACP. The chain is Glycerol-3-phosphate acyltransferase 2 from Dehalococcoides mccartyi (strain ATCC BAA-2266 / KCTC 15142 / 195) (Dehalococcoides ethenogenes (strain 195)).